Consider the following 579-residue polypeptide: MSASSLLEQRPKGQGNKVQNGSVHQKDGLNDDDFEPYLSPQARPNNAYTAMSDSYLPSYYSPSIGFSYSLGEAAWSTGGDTAMPYLTSYGQLSNGEPHFLPDAMFGQPGALGSTPFLGQHGFNFFPSGIDFSAWGNNSSQGQSTQSSGYSSNYAYAPSSLGGAMIDGQSAFANETLNKAPGMNTIDQGMAALKLGSTEVASNVPKVVGSAVGSGSITSNIVASNSLPPATIAPPKPASWADIASKPAKQQPKLKTKNGIAGSSLPPPPIKHNMDIGTWDNKGPVAKAPSQALVQNIGQPTQGSPQHVGQQANNSPPVAQASVGQQTQPLPPPPPQPAQLSVQQQAAQPTRWVAPRNRGSGFGHNGVDGNGVGQSQAGSGSTPSEPHPVLEKLRSINNYNPKDFDWNLKHGRVFIIKSYSEDDIHRSIKYNIWCSTEHGNKRLDAAYRSMNGKGPVYLLFSVNGSGHFCGVAEMKSAVDYNTCAGVWSQDKWKGRFDVRWIFVKDVPNSQLRHIRLENNENKPVTNSRDTQEVPLEKAKQVLKIIASYKHTTSIFDDFSHYEKRQEEEESVKKERQGRGK.

The tract at residues 1–45 is disordered; that stretch reads MSASSLLEQRPKGQGNKVQNGSVHQKDGLNDDDFEPYLSPQARPN. N-acetylserine is present on Ser2. A phosphoserine mark is found at Ser2, Ser4, Ser5, Ser22, Ser39, and Ser196. Positions 2-384 are localization to mRNA processing bodies (P-bodies); it reads SASSLLEQRP…QAGSGSTPSE (383 aa). Residues 247 to 387 are disordered; the sequence is AKQQPKLKTK…SGSTPSEPHP (141 aa). Positions 291–316 are enriched in polar residues; it reads ALVQNIGQPTQGSPQHVGQQANNSPP. The span at 337–349 shows a compositional bias: low complexity; that stretch reads AQLSVQQQAAQPT. Ser359 carries the phosphoserine modification. Residues 359–371 show a composition bias toward gly residues; sequence SGFGHNGVDGNGV. Polar residues predominate over residues 372 to 383; it reads GQSQAGSGSTPS. The tract at residues 385-579 is interaction with m6A-containing mRNAs; it reads PHPVLEKLRS…VKKERQGRGK (195 aa). The residue at position 394 (Ser394) is a Phosphoserine. One can recognise a YTH domain in the interval 410–544; sequence GRVFIIKSYS…EKAKQVLKII (135 aa). RNA contacts are provided by residues 416-418, Asp422, 432-433, Asn462, Trp486, and Trp491; these read KSY and WC.

This sequence belongs to the YTHDF family. YTHDF2 subfamily. In terms of assembly, interacts with CNOT1; interaction is direct and promotes recruitment of the CCR4-NOT complex. Interacts with YTHDF3. Interacts with RIDA/HRSP12; interaction leads to recruitment of the ribonuclease P/MRP complex. In terms of processing, ubiquitinated by the SCF(SKP2) complex, leading to its degradation.

It localises to the cytoplasm. Its subcellular location is the cytosol. The protein localises to the P-body. It is found in the stress granule. The protein resides in the nucleus. In terms of biological role, specifically recognizes and binds N6-methyladenosine (m6A)-containing RNAs, and regulates their stability. M6A is a modification present at internal sites of mRNAs and some non-coding RNAs and plays a role in mRNA stability and processing. Acts as a regulator of mRNA stability by promoting degradation of m6A-containing mRNAs via interaction with the CCR4-NOT and ribonuclease P/MRP complexes, depending on the context. The YTHDF paralogs (YTHDF1, YTHDF2 and YTHDF3) share m6A-containing mRNAs targets and act redundantly to mediate mRNA degradation and cellular differentiation. M6A-containing mRNAs containing a binding site for RIDA/HRSP12 (5'-GGUUC-3') are preferentially degraded by endoribonucleolytic cleavage: cooperative binding of RIDA/HRSP12 and YTHDF2 to transcripts leads to recruitment of the ribonuclease P/MRP complex. Other m6A-containing mRNAs undergo deadenylation via direct interaction between YTHDF2 and CNOT1, leading to recruitment of the CCR4-NOT and subsequent deadenylation of m6A-containing mRNAs. Required maternally to regulate oocyte maturation: probably acts by binding to m6A-containing mRNAs, thereby regulating maternal transcript dosage during oocyte maturation, which is essential for the competence of oocytes to sustain early zygotic development. Also required during spermatogenesis: regulates spermagonial adhesion by promoting degradation of m6A-containing transcripts coding for matrix metallopeptidases. Also involved in hematopoietic stem cells specification by binding to m6A-containing mRNAs, leading to promote their degradation. Also acts as a regulator of neural development by promoting m6A-dependent degradation of neural development-related mRNA targets. Inhibits neural specification of induced pluripotent stem cells by binding to methylated neural-specific mRNAs and promoting their degradation, thereby restraining neural differentiation. Regulates circadian regulation of hepatic lipid metabolism: acts by promoting m6A-dependent degradation of PPARA transcripts. Regulates the innate immune response to infection by inhibiting the type I interferon response: acts by binding to m6A-containing IFNB transcripts and promoting their degradation. May also act as a promoter of cap-independent mRNA translation following heat shock stress: upon stress, relocalizes to the nucleus and specifically binds mRNAs with some m6A methylation mark at their 5'-UTR, protecting demethylation of mRNAs by FTO, thereby promoting cap-independent mRNA translation. Regulates mitotic entry by promoting the phase-specific m6A-dependent degradation of WEE1 transcripts. Promotes formation of phase-separated membraneless compartments, such as P-bodies or stress granules, by undergoing liquid-liquid phase separation upon binding to mRNAs containing multiple m6A-modified residues: polymethylated mRNAs act as a multivalent scaffold for the binding of YTHDF proteins, juxtaposing their disordered regions and thereby leading to phase separation. The resulting mRNA-YTHDF complexes then partition into different endogenous phase-separated membraneless compartments, such as P-bodies, stress granules or neuronal RNA granules. May also recognize and bind RNAs modified by C5-methylcytosine (m5C) and act as a regulator of rRNA processing. The chain is YTH domain-containing family protein 2 from Macaca fascicularis (Crab-eating macaque).